Here is a 115-residue protein sequence, read N- to C-terminus: MEKMLLKSTTRHVRIFTAEVVDKELQFHPNKLTLDLDPDNEFIWNEDSLKKINQKFKELINERAGRDLDDYELRKIGSEVEGLIKFLLQNGELSYNPDCRVMNYSMGLPKTNELL.

Belongs to the complex I NdhM subunit family. As to quaternary structure, NDH-1 can be composed of about 15 different subunits; different subcomplexes with different compositions have been identified which probably have different functions.

It localises to the cellular thylakoid membrane. It carries out the reaction a plastoquinone + NADH + (n+1) H(+)(in) = a plastoquinol + NAD(+) + n H(+)(out). It catalyses the reaction a plastoquinone + NADPH + (n+1) H(+)(in) = a plastoquinol + NADP(+) + n H(+)(out). Its function is as follows. NDH-1 shuttles electrons from an unknown electron donor, via FMN and iron-sulfur (Fe-S) centers, to quinones in the respiratory and/or the photosynthetic chain. The immediate electron acceptor for the enzyme in this species is believed to be plastoquinone. Couples the redox reaction to proton translocation, and thus conserves the redox energy in a proton gradient. Cyanobacterial NDH-1 also plays a role in inorganic carbon-concentration. This chain is NAD(P)H-quinone oxidoreductase subunit M, found in Prochlorococcus marinus (strain MIT 9215).